The sequence spans 419 residues: ERLTKRYVELVIVADHRMFTKYNGNLKKIRKWIYQIVNTINEIYIPLNIRVALVRLEIWSNGDLIDVTSAANVTLKSFGNWRVTNLLRRKSHDNAQLLTAIDLDEETLGLAPLGTMCDPKLSIGIVQDHSPINLLVAVTMAHELGHNLGMVHDENRCHCSTPACVMCAVLRQRPSYEFSDCSLNHYRTFIINYNPQCILNEPLQTDIISPPVCGNELLEVGEECDCGSPRTCRDPCCDAATCKLHSWVECESGECCQQCKFTSAGNVCRPARSECDIAESCTGQSADCPTDDFHRNGKPCLHNFGYCYNGNCPIMYHQCYALWGSNVTVAPDACFDINQSGNNSFYCRKENGVNIPCAQEDVKCGRLFCNVNDFLCRHKYSDDGMVDHGTKCADGKVCKNRQCVDVTTAYKSTSGFSQI.

A Peptidase M12B domain is found at 6–202 (RYVELVIVAD…YNPQCILNEP (197 aa)). Glutamate 9 is a binding site for Ca(2+). N-linked (GlcNAc...) asparagine glycosylation occurs at asparagine 72. Aspartate 93 is a binding site for Ca(2+). Intrachain disulfides connect cysteine 117/cysteine 197, cysteine 157/cysteine 181, and cysteine 159/cysteine 164. Histidine 142 contacts Zn(2+). Glutamate 143 is an active-site residue. The Zn(2+) site is built by histidine 146 and histidine 152. Ca(2+)-binding residues include cysteine 197, asparagine 200, valine 212, asparagine 215, leucine 217, glutamate 219, glutamate 222, and aspartate 225. In terms of domain architecture, Disintegrin spans 210-296 (PPVCGNELLE…DCPTDDFHRN (87 aa)). 14 disulfides stabilise this stretch: cysteine 213-cysteine 242, cysteine 224-cysteine 237, cysteine 226-cysteine 232, cysteine 236-cysteine 259, cysteine 250-cysteine 256, cysteine 255-cysteine 281, cysteine 268-cysteine 288, cysteine 275-cysteine 307, cysteine 300-cysteine 312, cysteine 319-cysteine 369, cysteine 334-cysteine 376, cysteine 347-cysteine 357, cysteine 364-cysteine 398, and cysteine 392-cysteine 403. The D/ECD-tripeptide motif lies at 274–276 (ECD). 3 N-linked (GlcNAc...) asparagine glycosylation sites follow: asparagine 326, asparagine 338, and asparagine 342.

Belongs to the venom metalloproteinase (M12B) family. P-III subfamily. P-IIIa sub-subfamily. In terms of assembly, monomer. Zn(2+) is required as a cofactor. As to expression, expressed by the venom gland.

Its subcellular location is the secreted. The enzyme catalyses Cleavage of 3-Asn-|-Gln-4, 5-His-|-Leu-6, 10-His-|-Leu-11, 14-Ala-|-Leu-15 and 16-Tyr-|-Leu-17 in insulin B chain. Removes C-terminal Leu from small peptides.. Its function is as follows. Snake venom zinc metalloproteinase-disintegrin that causes hemorrhage by provoking the degradation of the sub-endothelial matrix proteins (fibronectin, laminin, type IV collagen, nidogen, and gelatins) and disturbances in platelet function. The recombinant cysteine-rich domain interacts with the alpha-2/beta-1 integrin (ITGA2/ITGB1) (collagen receptor), and inhibits the platelet aggregation induced by collagen. The polypeptide is Zinc metalloproteinase-disintegrin-like atrolysin-A (Crotalus atrox (Western diamondback rattlesnake)).